The chain runs to 389 residues: MSHRKYEAPRHGSLGFLPRKRAAKQRGRVKSFPKDVKSKPVALTAFLGYKAGMTTIVRDLDRPGSKMHKREVVEAATVVDTPPMVVVGVVGYVETPRGLRSLTTVWAEHLSEEVRRRFYKNWYKSKKKAFTKYSGKYATDAKQVETELARIKKYASVVRVLAHTQIKKTPLSQKKAHLAEIQINGGSVSDKVDWAKEHFEKEVSVDSVFEQDEMIDVIAVTKGHGFEGVTHRWGTKKLPRKTHRGLRKVACIGAWHPANVNWTVARAGQNGYHHRTSINHKVYRVGKGTDEANGATEFDRTKKTINPMGGFVRYGNVNNDFVLLKGSIPGVKKRVVTLRKSLYVDTSRRAVEKVNLKWIDTASRFGKGRFQTPAEKHAFMGTLKKDLEN.

The protein belongs to the universal ribosomal protein uL3 family. In terms of assembly, component of the large ribosomal subunit. Mature ribosomes consist of a small (40S) and a large (60S) subunit. The 40S subunit contains about 32 different proteins and 1 molecule of RNA (18S). The 60S subunit contains 45 different proteins and 3 molecules of RNA (25S, 5.8S and 5S).

Its subcellular location is the cytoplasm. Functionally, component of the ribosome, a large ribonucleoprotein complex responsible for the synthesis of proteins in the cell. The small ribosomal subunit (SSU) binds messenger RNAs (mRNAs) and translates the encoded message by selecting cognate aminoacyl-transfer RNA (tRNA) molecules. The large subunit (LSU) contains the ribosomal catalytic site termed the peptidyl transferase center (PTC), which catalyzes the formation of peptide bonds, thereby polymerizing the amino acids delivered by tRNAs into a polypeptide chain. The nascent polypeptides leave the ribosome through a tunnel in the LSU and interact with protein factors that function in enzymatic processing, targeting, and the membrane insertion of nascent chains at the exit of the ribosomal tunnel. RPL3 plays a role in coordinating processes of accommodating the aminoacyl-tRNA in the PTC. The polypeptide is Large ribosomal subunit protein uL3 (Candida albicans (strain SC5314 / ATCC MYA-2876) (Yeast)).